An 837-amino-acid polypeptide reads, in one-letter code: Protein ROD1 (837 aa).

2 positions are modified to phosphoserine: S138 and S141. K401 is covalently cross-linked (Glycyl lysine isopeptide (Lys-Gly) (interchain with G-Cter in ubiquitin)). The residue at position 436 (S436) is a Phosphoserine. Positions 487–490 (PPNY) match the PY-motif motif. The residue at position 536 (S536) is a Phosphoserine. Residues 656 to 659 (PPAY) carry the PY-motif motif. Disordered stretches follow at residues 675–726 (ERPQ…SVSL) and 763–837 (SFTS…RDRS). The segment covering 685 to 703 (TSSLLPLPGSSKSSNNLKR) has biased composition (low complexity). The segment covering 716 to 726 (PRNNSGSSVSL) has biased composition (polar residues). A phosphoserine mark is found at S720 and S725. Residues 763 to 773 (SFTSNSSSKNN) show a composition bias toward low complexity. Basic and acidic residues predominate over residues 774 to 792 (SHFDKTDSTSDANKPREEE). Positions 805-815 (SSSVRSNNSNS) are enriched in low complexity.

The protein belongs to the arrestin family. As to quaternary structure, interacts with RSP5 via its 2 PY-motifs.

It is found in the membrane. Mediates resistance to o-dinitrobenzene, calcium and zinc. This chain is Protein ROD1 (ROD1), found in Saccharomyces cerevisiae (strain ATCC 204508 / S288c) (Baker's yeast).